Reading from the N-terminus, the 253-residue chain is MASVILYEYPFNERIRAYLRLEYLFDRLFFFAREGDARLHQIAVSSLFDLLDASERTDIKGAVLQDLERQRMALVGLRDHPGVAQDALEAMLRDMERVVAALAAQGKTGQALRENEWLVSLRGRLAVPGGATQVDMPSYHAWQNKPESVRCADLQSWLAPLLPLHEGLSMALRLLRESGRRADIAAEQGGYQQMLAGKIYHLLRVWVDPSLGVFPEISANKYMVWIRFSTQDGEVKPQQVSRDVAFQMSLCSS.

It belongs to the ZapD family. As to quaternary structure, interacts with FtsZ.

It localises to the cytoplasm. Functionally, cell division factor that enhances FtsZ-ring assembly. Directly interacts with FtsZ and promotes bundling of FtsZ protofilaments, with a reduction in FtsZ GTPase activity. This chain is Cell division protein ZapD, found in Bordetella bronchiseptica (strain ATCC BAA-588 / NCTC 13252 / RB50) (Alcaligenes bronchisepticus).